Consider the following 193-residue polypeptide: Probable GTP-binding protein EngB (193 aa).

One can recognise an EngB-type G domain in the interval 22–193 (MYPEISFIGR…ELWQIIEDLL (172 aa)). GTP-binding positions include 30–37 (GRSNVGKS), 57–61 (GKTRT), 75–78 (DLPG), 142–145 (TKMD), and 174–176 (FSS). Ser37 and Thr59 together coordinate Mg(2+).

Belongs to the TRAFAC class TrmE-Era-EngA-EngB-Septin-like GTPase superfamily. EngB GTPase family. Mg(2+) is required as a cofactor.

Functionally, necessary for normal cell division and for the maintenance of normal septation. This Natranaerobius thermophilus (strain ATCC BAA-1301 / DSM 18059 / JW/NM-WN-LF) protein is Probable GTP-binding protein EngB.